Here is a 288-residue protein sequence, read N- to C-terminus: Probable aquaporin PIP2-2 (288 aa).

The disordered stretch occupies residues Met1–Thr21. 2 helical membrane-spanning segments follow: residues Ala42–Ile62 and Gly81–Cys101. The short motif at Asn111–Ala113 is the NPA 1 element. 3 helical membrane-spanning segments follow: residues Val130–Phe150, Gly172–Ala192, and Ile204–Ile224. Positions Asn232–Ala234 match the NPA 2 motif. The chain crosses the membrane as a helical span at residues Ile254–Leu274.

This sequence belongs to the MIP/aquaporin (TC 1.A.8) family. PIP (TC 1.A.8.11) subfamily. As to expression, expressed in roots, leaves and anthers.

It is found in the cell membrane. In terms of biological role, aquaporins facilitate the transport of water and small neutral solutes across cell membranes. The chain is Probable aquaporin PIP2-2 (PIP2-2) from Oryza sativa subsp. japonica (Rice).